The sequence spans 469 residues: 3-isopropylmalate dehydratase large subunit (469 aa).

3 residues coordinate [4Fe-4S] cluster: cysteine 350, cysteine 410, and cysteine 413.

The protein belongs to the aconitase/IPM isomerase family. LeuC type 1 subfamily. Heterodimer of LeuC and LeuD. Requires [4Fe-4S] cluster as cofactor.

It carries out the reaction (2R,3S)-3-isopropylmalate = (2S)-2-isopropylmalate. The protein operates within amino-acid biosynthesis; L-leucine biosynthesis; L-leucine from 3-methyl-2-oxobutanoate: step 2/4. Catalyzes the isomerization between 2-isopropylmalate and 3-isopropylmalate, via the formation of 2-isopropylmaleate. The polypeptide is 3-isopropylmalate dehydratase large subunit (Brucella anthropi (strain ATCC 49188 / DSM 6882 / CCUG 24695 / JCM 21032 / LMG 3331 / NBRC 15819 / NCTC 12168 / Alc 37) (Ochrobactrum anthropi)).